A 258-amino-acid chain; its full sequence is SufE-like protein 2, chloroplastic (258 aa).

The disordered stretch occupies residues 1 to 32 (MNTSSSFKALASPPLISTSRPTTKSFPNPRFT). A compositionally biased stretch (polar residues) spans 15–32 (LISTSRPTTKSFPNPRFT). Catalysis depends on cysteine 122, which acts as the Cysteine persulfide intermediate.

It belongs to the SufE family. As to expression, highly expressed in flowers and pollen, and at low levels in roots, leaves and stems.

The protein resides in the plastid. It localises to the chloroplast. It functions in the pathway cofactor biosynthesis; iron-sulfur cluster biosynthesis. Its function is as follows. Participates in cysteine desulfurization mediated by NFS2. Can activate the cysteine desulfurase activity of NFS2 in vitro. Cysteine desulfurization mobilizes sulfur from L-cysteine to yield L-alanine and supplies the inorganic sulfur for iron-sulfur (Fe-S) cluster formation. This Arabidopsis thaliana (Mouse-ear cress) protein is SufE-like protein 2, chloroplastic (SUFE2).